The primary structure comprises 338 residues: Phenylalanine--tRNA ligase alpha subunit (338 aa).

Glu-253 serves as a coordination point for Mg(2+).

This sequence belongs to the class-II aminoacyl-tRNA synthetase family. Phe-tRNA synthetase alpha subunit type 1 subfamily. As to quaternary structure, tetramer of two alpha and two beta subunits. It depends on Mg(2+) as a cofactor.

Its subcellular location is the cytoplasm. The enzyme catalyses tRNA(Phe) + L-phenylalanine + ATP = L-phenylalanyl-tRNA(Phe) + AMP + diphosphate + H(+). This is Phenylalanine--tRNA ligase alpha subunit from Syntrophotalea carbinolica (strain DSM 2380 / NBRC 103641 / GraBd1) (Pelobacter carbinolicus).